The chain runs to 192 residues: Lumican (192 aa).

9 LRR repeats span residues L1–K23, Q26–K46, S47–L68, N69–K90, S94–A114, S115–R136, G139–I162, S164–L185, and E186–V192.

Belongs to the small leucine-rich proteoglycan (SLRP) family. SLRP class II subfamily. In terms of assembly, binds to laminin. Post-translationally, sulfated on tyrosine residue(s). Contains keratan sulfate.

The protein localises to the secreted. The protein resides in the extracellular space. Its subcellular location is the extracellular matrix. In Oryctolagus cuniculus (Rabbit), this protein is Lumican (LUM).